An 88-amino-acid chain; its full sequence is Small ribosomal subunit protein uS15c (88 aa).

Belongs to the universal ribosomal protein uS15 family. In terms of assembly, part of the 30S ribosomal subunit.

The protein resides in the plastid. Its subcellular location is the chloroplast. In Lepidium virginicum (Virginia pepperweed), this protein is Small ribosomal subunit protein uS15c (rps15).